We begin with the raw amino-acid sequence, 338 residues long: MVMMKKLLSNRLFNMSKTASQSLMNCRTSSSSSLAMRTRVPKDIGEATIDPEPGDLTISQRFLNKFSMNGIDTTSKMSIGESLMEKLKEMDMNKDRIRLDGLSHPKEETLGLTVQDVKKLLRAAEIEVIKTKLMETGKIWIRYSDFLGVCSDSSLDPSQGALIAKMLDDSGNVIVMGNSVCLRPHQLTKSIEGLLPLSQIHNPNDPRRKELNELEAIKTVIDQKAHSLVRRELWAGLGYLIIQTAGFMRLTFWDLTWDVMEPICFYVSSVYFMAGYTFFLKTSREPSFQGFYQSRFEAKQRKLMQSEDFDVGRYDELKKLFNPKPSGAVPKILGSLQN.

The transit peptide at 1 to 36 directs the protein to the mitochondrion; that stretch reads MVMMKKLLSNRLFNMSKTASQSLMNCRTSSSSSLAM. Residues 233–253 form a helical membrane-spanning segment; the sequence is LWAGLGYLIIQTAGFMRLTFW. The short motif at 257 to 265 is the Selectivity filter element; it reads WDVMEPICF. A Ca(2+)-binding site is contributed by glutamate 261. The helical transmembrane segment at 263–280 threads the bilayer; it reads ICFYVSSVYFMAGYTFFL.

It belongs to the MCU (TC 1.A.77) family.

The protein resides in the mitochondrion inner membrane. The enzyme catalyses Ca(2+)(in) = Ca(2+)(out). Mitochondrial inner membrane calcium uniporter that mediates calcium uptake into mitochondria. Constitutes a pore-forming and calcium-conducting subunit. Mitochondrial calcium homeostasis plays key roles in cellular physiology and regulates cell bioenergetics, cytoplasmic calcium signals and activation of cell death pathways. In Arabidopsis thaliana (Mouse-ear cress), this protein is Calcium uniporter protein 4, mitochondrial.